Consider the following 461-residue polypeptide: Argininosuccinate lyase (461 aa).

This sequence belongs to the lyase 1 family. Argininosuccinate lyase subfamily.

It localises to the cytoplasm. The enzyme catalyses 2-(N(omega)-L-arginino)succinate = fumarate + L-arginine. The protein operates within amino-acid biosynthesis; L-arginine biosynthesis; L-arginine from L-ornithine and carbamoyl phosphate: step 3/3. This Shewanella piezotolerans (strain WP3 / JCM 13877) protein is Argininosuccinate lyase.